The sequence spans 98 residues: MADQKGPKYTPAAEKPRGRRKTAIGYVVSDKMQKTIVVELEDRKSHPLYGKIIRTTKKVKAHDENGEAGIGDRVSLMETRPLSATKRWRLVEILEKAK.

The tract at residues 1-21 (MADQKGPKYTPAAEKPRGRRK) is disordered. Lysine 96 participates in a covalent cross-link: Isoglutamyl lysine isopeptide (Lys-Gln) (interchain with Q-Cter in protein Pup).

The protein belongs to the universal ribosomal protein uS17 family. As to quaternary structure, part of the 30S ribosomal subunit.

One of the primary rRNA binding proteins, it binds specifically to the 5'-end of 16S ribosomal RNA. This is Small ribosomal subunit protein uS17 (rpsQ) from Mycolicibacterium smegmatis (strain ATCC 700084 / mc(2)155) (Mycobacterium smegmatis).